A 305-amino-acid polypeptide reads, in one-letter code: Coiled-coil domain-containing protein 83 (305 aa).

The segment at 1–25 (MDSSAKGSKKDAPDGPPKDSKLPVS) is disordered. Residues 8–21 (SKKDAPDGPPKDSK) show a composition bias toward basic and acidic residues. Residues 37–186 (ENAVERFMFH…LEDEKKRISR (150 aa)) are a coiled coil.

In Mus musculus (Mouse), this protein is Coiled-coil domain-containing protein 83 (Ccdc83).